Consider the following 228-residue polypeptide: UPF0502 protein AZOSEA09860 (228 aa).

Belongs to the UPF0502 family.

In Aromatoleum aromaticum (strain DSM 19018 / LMG 30748 / EbN1) (Azoarcus sp. (strain EbN1)), this protein is UPF0502 protein AZOSEA09860.